Here is a 278-residue protein sequence, read N- to C-terminus: Biotin synthase (278 aa).

The Radical SAM core domain maps to 1-227 (MQIMLCAISN…QSVVMVAGGR (227 aa)). [4Fe-4S] cluster-binding residues include cysteine 16, cysteine 20, and cysteine 23. [2Fe-2S] cluster is bound by residues cysteine 60, cysteine 95, and cysteine 153.

Belongs to the radical SAM superfamily. Biotin synthase family. Homodimer. The cofactor is [4Fe-4S] cluster. Requires [2Fe-2S] cluster as cofactor.

It carries out the reaction (4R,5S)-dethiobiotin + (sulfur carrier)-SH + 2 reduced [2Fe-2S]-[ferredoxin] + 2 S-adenosyl-L-methionine = (sulfur carrier)-H + biotin + 2 5'-deoxyadenosine + 2 L-methionine + 2 oxidized [2Fe-2S]-[ferredoxin]. Its pathway is cofactor biosynthesis; biotin biosynthesis; biotin from 7,8-diaminononanoate: step 2/2. Functionally, catalyzes the conversion of dethiobiotin (DTB) to biotin by the insertion of a sulfur atom into dethiobiotin via a radical-based mechanism. The protein is Biotin synthase of Campylobacter jejuni subsp. jejuni serotype O:6 (strain 81116 / NCTC 11828).